The sequence spans 368 residues: Large ribosomal subunit protein bL27m (368 aa).

The N-terminal 20 residues, 1–20 (MFSGLHTSKYACQVVVQIRT), are a transit peptide targeting the mitochondrion. Residues 23-44 (KRAAGSRTSMKDSAGRRLGPKK) form a disordered region. Basic and acidic residues predominate over residues 31-44 (SMKDSAGRRLGPKK).

The protein belongs to the bacterial ribosomal protein bL27 family.

Its subcellular location is the mitochondrion. Functionally, component of the large subunit of mitochondrial ribosome. This chain is Large ribosomal subunit protein bL27m (MRPL2), found in Candida glabrata (strain ATCC 2001 / BCRC 20586 / JCM 3761 / NBRC 0622 / NRRL Y-65 / CBS 138) (Yeast).